The primary structure comprises 284 residues: Bifunctional protein FolD (284 aa).

NADP(+) is bound by residues 165–167 (GRS), Ser-190, and Ile-231.

The protein belongs to the tetrahydrofolate dehydrogenase/cyclohydrolase family. As to quaternary structure, homodimer.

The catalysed reaction is (6R)-5,10-methylene-5,6,7,8-tetrahydrofolate + NADP(+) = (6R)-5,10-methenyltetrahydrofolate + NADPH. The enzyme catalyses (6R)-5,10-methenyltetrahydrofolate + H2O = (6R)-10-formyltetrahydrofolate + H(+). It participates in one-carbon metabolism; tetrahydrofolate interconversion. Catalyzes the oxidation of 5,10-methylenetetrahydrofolate to 5,10-methenyltetrahydrofolate and then the hydrolysis of 5,10-methenyltetrahydrofolate to 10-formyltetrahydrofolate. In Streptococcus thermophilus (strain ATCC BAA-250 / LMG 18311), this protein is Bifunctional protein FolD.